Consider the following 1066-residue polypeptide: E3 ubiquitin-protein ligase RNF31 (1066 aa).

The tract at residues 1 to 479 (MPGDEERGFL…PEKQRQDKMR (479 aa)) is polyubiquitin-binding. The PUB domain occupies 70-141 (TLSTALNILE…SFPEGQEEPD (72 aa)). The disordered stretch occupies residues 251–287 (LRQALPGSHQTASLSSSLPASSQPRPPSSSLALGDSS). The span at 262–287 (ASLSSSLPASSQPRPPSSSLALGDSS) shows a compositional bias: low complexity. 2 consecutive RanBP2-type zinc fingers follow at residues 293–325 (PANACLPWHCLTCATLNEPWAVFCAVCSQPKGC) and 344–373 (ARDQWACQSCTFENEAAAVLCAICERPRLA). S377 is subject to Phosphoserine. The RanBP2-type 3 zinc-finger motif lies at 403-432 (QPQVWYCDHCTFCNSGPVWVCAMCNRTRDP). Residues 434–478 (PTQPALQSYPSSLEKGRPKPGSSQHLGSSLPASCGDPEKQRQDKM) form a disordered region. Residues 454 to 464 (GSSQHLGSSLP) are compositionally biased toward polar residues. The span at 469 to 478 (DPEKQRQDKM) shows a compositional bias: basic and acidic residues. The tract at residues 557-610 (GNLDEAVEECVRARRRKVHELQSLGFGPKEGSLQALFQHGGDVARALTELQRQR) is interaction with RBCK1. The UBA domain occupies 558–609 (NLDEAVEECVRARRRKVHELQSLGFGPKEGSLQALFQHGGDVARALTELQRQ). A TRIAD supradomain region spans residues 689–923 (LAQECAVCGW…KSLHGHHPRD (235 aa)). Residues C693, C696, C711, C713, C716, C719, C738, C741, C793, C796, C811, C814, C819, C822, H830, C835, C865, and C868 each coordinate Zn(2+). Residues 693 to 743 (CAVCGWALPRNRMQALISCECTICPECFRQHFTIALKEKHITDMVCPACGR) form an RING-type 1 zinc finger. The IBR-type zinc-finger motif lies at 773–835 (ALFHKKLTEA…WEEQHRGRSC (63 aa)). Residues 865-895 (CPKCKFSYALARGGCMHFHCTQCRHQFCSGC) form an RING-type 2; atypical zinc finger. C879 is a catalytic residue. Residues C884, C887, C892, C895, C910, and H919 each contribute to the Zn(2+) site. The tract at residues 904-1066 (KCPDPNCKVK…LGQSIARRRK (163 aa)) is LDD domain.

This sequence belongs to the RBR family. Component of the LUBAC complex (linear ubiquitin chain assembly complex) which consists of SHARPIN, RBCK1 and RNF31. LUBAC has a MW of approximately 600 kDa suggesting a heteromultimeric assembly of its subunits. Associates with the TNF-R1 signaling complex (TNF-RSC) in a stimulation-dependent manner. Interacts (via the PUB domain) with OTULIN (via the PIM motif); the interaction is direct. Interacts (via the PUB domain) with VCP (via the PIM motif). Interacts (via the PUB domain) with SPATA2 (via the PIM motif); interaction is direct and bridges RNF31 and CYLD. Interacts with CYLD; the interaction is indirect and is mediated via SPATA2. Interacts with MUSK. Interacts with CARD11, promoting linear ubiquitination of BCL10. Autoubiquitinated. Interaction with OTULIN is required to suppress formation of 'Met-1'-linked polyubiquitin chains and prevent subsequent inactivation of the LUBAC complex. Post-translationally, cleaved by caspase during apoptosis. In terms of tissue distribution, widely expressed (at protein level). Not expressed in heart.

It is found in the cytoplasm. The enzyme catalyses [E2 ubiquitin-conjugating enzyme]-S-ubiquitinyl-L-cysteine + [acceptor protein]-L-lysine = [E2 ubiquitin-conjugating enzyme]-L-cysteine + [acceptor protein]-N(6)-ubiquitinyl-L-lysine.. It participates in protein modification; protein ubiquitination. Functionally, E3 ubiquitin-protein ligase component of the LUBAC complex which conjugates linear ('Met-1'-linked) polyubiquitin chains to substrates and plays a key role in NF-kappa-B activation and regulation of inflammation. LUBAC conjugates linear polyubiquitin to IKBKG and RIPK1 and is involved in activation of the canonical NF-kappa-B and the JNK signaling pathways. Linear ubiquitination mediated by the LUBAC complex interferes with TNF-induced cell death and thereby prevents inflammation. LUBAC is recruited to the TNF-R1 signaling complex (TNF-RSC) following polyubiquitination of TNF-RSC components by BIRC2 and/or BIRC3 and to conjugate linear polyubiquitin to IKBKG and possibly other components contributing to the stability of the complex. The LUBAC complex is also involved in innate immunity by conjugating linear polyubiquitin chains at the surface of bacteria invading the cytosol to form the ubiquitin coat surrounding bacteria. LUBAC is not able to initiate formation of the bacterial ubiquitin coat, and can only promote formation of linear polyubiquitins on pre-existing ubiquitin. Recruited to the surface of bacteria by RNF213, which initiates the bacterial ubiquitin coat. The bacterial ubiquitin coat acts as an 'eat-me' signal for xenophagy and promotes NF-kappa-B activation. Together with OTULIN, the LUBAC complex regulates the canonical Wnt signaling during angiogenesis. RNF31 is required for linear ubiquitination of BCL10, thereby promoting TCR-induced NF-kappa-B activation. Binds polyubiquitin of different linkage types. This chain is E3 ubiquitin-protein ligase RNF31, found in Mus musculus (Mouse).